The sequence spans 735 residues: Transcription factor RFX4 (735 aa).

Residues 27–59 form a disordered region; sequence NKRYSSHTSLGNVSNDENEEKENNRASKPHSTP. A compositionally biased stretch (polar residues) spans 32 to 41; it reads SHTSLGNVSN. A DNA-binding region spans residues 44–126; sequence NEEKENNRAS…RRLGTRGQSK (83 aa). The RFX-type winged-helix DNA-binding region spans 61–136; that stretch reads TLQWLEENYE…YHYYGIAVKE (76 aa). Residues 315–487 form a necessary for dimerization region; the sequence is RFSQILRRQT…NELMRAMKGE (173 aa). Residues 501-538 are disordered; that stretch reads EATPPTPSPGPSFSPAKSATSVEVPPPSSPVSNPSPEY.

It belongs to the RFX family. As to quaternary structure, homodimer. Heterodimer with RFX2 and RFX3. Binds DNA. Interacts with GPS2. In terms of tissue distribution, isoform 1: Brain-specific. Isoform 2: Testis-specific. Isoform 1: Highly expressed in the suprachiasmatic nucleus, the central pacemaker site of the circadian clock (at protein level).

Its subcellular location is the nucleus. Transcription factor that plays a role in early brain development. May activate transcription by interacting directly with the X-box. May activate transcription from CX3CL1 promoter through the X-box during brain development. May be required for neural tube ciliogenesis during embryogenesis. The sequence is that of Transcription factor RFX4 (Rfx4) from Mus musculus (Mouse).